Reading from the N-terminus, the 211-residue chain is Ribosomal RNA small subunit methyltransferase G (211 aa).

S-adenosyl-L-methionine is bound by residues Gly73, 126–127 (IE), and Arg142.

This sequence belongs to the methyltransferase superfamily. RNA methyltransferase RsmG family.

The protein resides in the cytoplasm. The catalysed reaction is guanosine(527) in 16S rRNA + S-adenosyl-L-methionine = N(7)-methylguanosine(527) in 16S rRNA + S-adenosyl-L-homocysteine. Specifically methylates the N7 position of guanine in position 527 of 16S rRNA. The protein is Ribosomal RNA small subunit methyltransferase G of Methylorubrum populi (strain ATCC BAA-705 / NCIMB 13946 / BJ001) (Methylobacterium populi).